Consider the following 134-residue polypeptide: Small ribosomal subunit protein uS8c (134 aa).

The protein belongs to the universal ribosomal protein uS8 family. As to quaternary structure, part of the 30S ribosomal subunit.

The protein localises to the plastid. Its subcellular location is the chloroplast. One of the primary rRNA binding proteins, it binds directly to 16S rRNA central domain where it helps coordinate assembly of the platform of the 30S subunit. The protein is Small ribosomal subunit protein uS8c (rps8) of Chloranthus spicatus (Chulantree).